We begin with the raw amino-acid sequence, 173 residues long: 6,7-dimethyl-8-ribityllumazine synthase (173 aa).

5-amino-6-(D-ribitylamino)uracil-binding positions include Phe24, Ala58–Glu60, and Ala82–Ile84. Residue Glu87 to Thr88 coordinates (2S)-2-hydroxy-3-oxobutyl phosphate. The active-site Proton donor is His90. Asn115 is a binding site for 5-amino-6-(D-ribitylamino)uracil. Arg129 serves as a coordination point for (2S)-2-hydroxy-3-oxobutyl phosphate. A disordered region spans residues Ala150–Arg173. A compositionally biased stretch (acidic residues) spans Glu152–Arg173.

The protein belongs to the DMRL synthase family.

It catalyses the reaction (2S)-2-hydroxy-3-oxobutyl phosphate + 5-amino-6-(D-ribitylamino)uracil = 6,7-dimethyl-8-(1-D-ribityl)lumazine + phosphate + 2 H2O + H(+). It functions in the pathway cofactor biosynthesis; riboflavin biosynthesis; riboflavin from 2-hydroxy-3-oxobutyl phosphate and 5-amino-6-(D-ribitylamino)uracil: step 1/2. Functionally, catalyzes the formation of 6,7-dimethyl-8-ribityllumazine by condensation of 5-amino-6-(D-ribitylamino)uracil with 3,4-dihydroxy-2-butanone 4-phosphate. This is the penultimate step in the biosynthesis of riboflavin. In Bordetella pertussis (strain Tohama I / ATCC BAA-589 / NCTC 13251), this protein is 6,7-dimethyl-8-ribityllumazine synthase.